We begin with the raw amino-acid sequence, 255 residues long: Small ribosomal subunit protein uS2 (255 aa).

A disordered region spans residues 233–255 (DFVAEEAASEESLEELAEIVEGK).

It belongs to the universal ribosomal protein uS2 family.

The chain is Small ribosomal subunit protein uS2 (rpsB) from Lactococcus lactis subsp. lactis (strain IL1403) (Streptococcus lactis).